Reading from the N-terminus, the 892-residue chain is MEITHDYKVKLFEEMNFERKQCSECKQWFWTLDKERITCGDSPCDKYSFIGNPITTKKYTYNEMVKEFTNFFDERGHSPVKRSPVIAKRWRDDILLTIASIAVFQPWVTNGLVKPVKNPLVITQPCIRLNDIDNVGRTGRHLTCFTMGAHHAFNSKDEYKYWTDKTVELCFELMQKLGIDGHTITFIESWWEGGGNAGPCYEVITHGVELATLVFMQYKKVGNNYEEIPLKIVDTGYGIERFAWASQGTPTVYEALFSDIIEKLKKNANIPIVDEKIMAESATLAGLMDIENVGDLKALRQKVAEKIGMDVNELDRLISPLEYIYAISDHTRCLSFMFGDGIVPSNVKEGYLARLVLRKTLRYMEKVGISYSIKEIILMQLESMKEVYPELIGMKDYIMDVLDSEEKKYIQTVNKGRGIVERMTKLKSEITLNDLINLYDSNGLPPEIVKDIIDEINKTSKTKISIHVPDNFYTIVAERHEEEKAEEVAILKHELPELDLPKTELLFFKNTMQSEFEAKVLKIVDKYIILDRTVFYAEGGGQKYDIGQISGVDVVDVQKKNGIVFHKVLDISKFKEGNLVKGELNFENRLKLMRNHTATHVINAALKQVLGKHVWQTGSNVDTEKGRLDVTHYERISRKEIKEIEKIANEIVLLGKPVTCKFMDRNDAEQEYGFKIYQGGVVPGDTLRIVEIDGIDVEACGGTHVTNTSEIGYIKVLKTERIQDGVERLEYSTGMGSIFEIAALEDILLDSAEVLGVPIENLPKTAKRFFEEWKEQKKVIEELQKKVGELLKYELLEKFEKVGNLEILVEKVSGTSNELMAIADNLATNGKIVILMNDTDYILCKKGENVEISMKELIQKIGKGGGKENLAQGKYSTSKEQIREKAFELLKQ.

H596, H600, C700, and H704 together coordinate Zn(2+).

Belongs to the class-II aminoacyl-tRNA synthetase family. Requires Zn(2+) as cofactor.

The protein resides in the cytoplasm. The catalysed reaction is tRNA(Ala) + L-alanine + ATP = L-alanyl-tRNA(Ala) + AMP + diphosphate. Catalyzes the attachment of alanine to tRNA(Ala) in a two-step reaction: alanine is first activated by ATP to form Ala-AMP and then transferred to the acceptor end of tRNA(Ala). Also edits incorrectly charged Ser-tRNA(Ala) and Gly-tRNA(Ala) via its editing domain. The sequence is that of Alanine--tRNA ligase from Methanococcus vannielii (strain ATCC 35089 / DSM 1224 / JCM 13029 / OCM 148 / SB).